The primary structure comprises 185 residues: Acireductone dioxygenase (185 aa).

Fe(2+) is bound by residues histidine 97, histidine 99, glutamate 103, and histidine 141. Residues histidine 97, histidine 99, glutamate 103, and histidine 141 each contribute to the Ni(2+) site.

This sequence belongs to the acireductone dioxygenase (ARD) family. In terms of assembly, monomer. Fe(2+) serves as cofactor. The cofactor is Ni(2+).

The catalysed reaction is 1,2-dihydroxy-5-(methylsulfanyl)pent-1-en-3-one + O2 = 3-(methylsulfanyl)propanoate + CO + formate + 2 H(+). It carries out the reaction 1,2-dihydroxy-5-(methylsulfanyl)pent-1-en-3-one + O2 = 4-methylsulfanyl-2-oxobutanoate + formate + 2 H(+). It functions in the pathway amino-acid biosynthesis; L-methionine biosynthesis via salvage pathway; L-methionine from S-methyl-5-thio-alpha-D-ribose 1-phosphate: step 5/6. In terms of biological role, catalyzes 2 different reactions between oxygen and the acireductone 1,2-dihydroxy-3-keto-5-methylthiopentene (DHK-MTPene) depending upon the metal bound in the active site. Fe-containing acireductone dioxygenase (Fe-ARD) produces formate and 2-keto-4-methylthiobutyrate (KMTB), the alpha-ketoacid precursor of methionine in the methionine recycle pathway. Ni-containing acireductone dioxygenase (Ni-ARD) produces methylthiopropionate, carbon monoxide and formate, and does not lie on the methionine recycle pathway. The sequence is that of Acireductone dioxygenase from Stenotrophomonas maltophilia (strain K279a).